The sequence spans 1196 residues: Truncated transposon Ty1-A Gag-Pol polyprotein (1196 aa).

The region spanning 101 to 276 is the Integrase catalytic domain; the sequence is NSYEPFQYLH…AGLDISTLLP (176 aa). The Mg(2+) site is built by Asp112 and Asp177. Disordered regions lie at residues 397–528, 533–552, and 571–628; these read SKAV…ETEK, RSPS…NIVP, and DLPL…DNET. The segment covering 401–410 has biased composition (low complexity); that stretch reads SPTDSTPPST. Over residues 446-456 the composition is skewed to polar residues; the sequence is STPQISNIEST. Basic and acidic residues predominate over residues 479–494; it reads ESSHASKSKDFRHSDS. Polar residues-rich tracts occupy residues 495-523 and 542-552; these read YSEN…QISD and PENNSSHNIVP. Positions 619 to 653 match the Bipartite nuclear localization signal motif; the sequence is KKRSLEDNETEIKVSRDTWNTKNMRSLEPPRSKKR. One can recognise a Reverse transcriptase Ty1/copia-type domain in the interval 779–917; that stretch reads NNYYITQLDI…DILGLEIKYQ (139 aa). 6 residues coordinate Mg(2+): Asp787, Asp868, Asp869, Asp1051, Glu1093, and Asp1126. The RNase H Ty1/copia-type domain maps to 1051–1193; the sequence is DASYGNQPYY…IKTFKLLTNK (143 aa).

Initially, virus-like particles (VLPs) are composed of the structural unprocessed proteins Gag and Gag-Pol, and also contain the host initiator methionine tRNA (tRNA(i)-Met) which serves as a primer for minus-strand DNA synthesis, and a dimer of genomic Ty RNA. Processing of the polyproteins occurs within the particle and proceeds by an ordered pathway, called maturation. First, the protease (PR) is released by autocatalytic cleavage of the Gag-Pol polyprotein yielding capsid protein p45 and a Pol-p154 precursor protein. This cleavage is a prerequisite for subsequent processing of Pol-p154 at the remaining sites to release the mature structural and catalytic proteins. Maturation takes place prior to the RT reaction and is required to produce transposition-competent VLPs.

It is found in the cytoplasm. It localises to the nucleus. It catalyses the reaction DNA(n) + a 2'-deoxyribonucleoside 5'-triphosphate = DNA(n+1) + diphosphate. The catalysed reaction is Endonucleolytic cleavage to 5'-phosphomonoester.. In terms of biological role, reverse transcriptase/ribonuclease H (RT) is a multifunctional enzyme that catalyzes the conversion of the retro-elements RNA genome into dsDNA within the VLP. The enzyme displays a DNA polymerase activity that can copy either DNA or RNA templates, and a ribonuclease H (RNase H) activity that cleaves the RNA strand of RNA-DNA heteroduplexes during plus-strand synthesis and hydrolyzes RNA primers. The conversion leads to a linear dsDNA copy of the retrotransposon that includes long terminal repeats (LTRs) at both ends. Integrase (IN) targets the VLP to the nucleus, where a subparticle preintegration complex (PIC) containing at least integrase and the newly synthesized dsDNA copy of the retrotransposon must transit the nuclear membrane. Once in the nucleus, integrase performs the integration of the dsDNA into the host genome. This is Truncated transposon Ty1-A Gag-Pol polyprotein (TY1B-A) from Saccharomyces cerevisiae (strain ATCC 204508 / S288c) (Baker's yeast).